Reading from the N-terminus, the 318-residue chain is Cis-3-alkyl-4-alkyloxetan-2-one decarboxylase (318 aa).

The 246-residue stretch at 30–275 (PVVMVHGNPS…ADCGHYILED (246 aa)) folds into the AB hydrolase-1 domain.

Belongs to the AB hydrolase superfamily.

It catalyses the reaction a cis-3-alkyl-4-alkyloxetan-2-one = a cis-alkene + CO2. Its function is as follows. Involved in olefin biosynthesis. Catalyzes the elimination of carbon dioxide from beta-lactones to form the final olefin product. The S.oneidensis oleABCD genes produce 3,6,9,12,15,19,22,25,28-hentriacontanonaene, which may aid the cells in adapting to a sudden drop in temperature. This chain is Cis-3-alkyl-4-alkyloxetan-2-one decarboxylase, found in Shewanella oneidensis (strain ATCC 700550 / JCM 31522 / CIP 106686 / LMG 19005 / NCIMB 14063 / MR-1).